A 2564-amino-acid polypeptide reads, in one-letter code: Spectrin beta chain, non-erythrocytic 4 (2564 aa).

Residues 1 to 37 (MAQVPGEVDNMEGLPAPNNNPAARWESPDRGWEREQP) form a disordered region. The actin-binding stretch occupies residues 1 to 282 (MAQVPGEVDN…IITYVVSFYH (282 aa)). The segment covering 26–36 (ESPDRGWEREQ) has biased composition (basic and acidic residues). Calponin-homology (CH) domains follow at residues 61-165 (AVQK…LRFQ) and 180-285 (RSAK…HYFS). 14 Spectrin repeats span residues 311-418 (IERY…AALR), 430-533 (LAQR…RLEQ), 536-641 (ALQK…AELE), 774-879 (ALHQ…WLRD), 884-982 (YRMF…RKEE), 1089-1196 (RLQR…EALV), 1306-1407 (ELQH…RQLF), 1412-1512 (ADQL…RLLL), 1515-1617 (KELH…QQVL), 1623-1725 (VEQY…ALEQ), 1728-1830 (WLYQ…AQLL), 1835-1935 (ELHK…EDAR), 1944-2046 (ALRF…WLQQ), and 2049-2123 (EVHQ…QSKQ). A disordered region spans residues 1853–1872 (KRRRLPRLTTPPEPRPSASS). Residues 2208-2225 (PAAPEDAAETPATPAAAE) are compositionally biased toward low complexity. Disordered regions lie at residues 2208-2439 (PAAP…KSSN) and 2533-2564 (ARWG…GRRK). 3 stretches are compositionally biased toward basic and acidic residues: residues 2227–2254 (VRPR…RQES), 2268–2278 (ERQESAEHEAA), and 2287–2318 (EQME…DLVK). The span at 2343 to 2355 (PSLPQPRELPPGR) shows a compositional bias: pro residues. Basic and acidic residues-rich tracts occupy residues 2362 to 2377 (LPER…ARDR) and 2424 to 2435 (FLLRKRELDANR). The region spanning 2418–2527 (TVQHEGFLLR…WLEAVASSVA (110 aa)) is the PH domain. Residues 2538-2547 (TLPTTSSTDE) are compositionally biased toward polar residues. Over residues 2548-2564 (GNPKREGGDRRASGRRK) the composition is skewed to basic and acidic residues.

This sequence belongs to the spectrin family. Expressed in skeletal muscle at the sarcolemma and in the muscle capillaries (at protein level). Abundantly expressed in brain and pancreatic islets.

The protein localises to the cytoplasm. It localises to the cytoskeleton. Its subcellular location is the cell cortex. The polypeptide is Spectrin beta chain, non-erythrocytic 4 (SPTBN4) (Homo sapiens (Human)).